A 198-amino-acid chain; its full sequence is Inosine triphosphate pyrophosphatase (198 aa).

An N-acetylalanine modification is found at Ala-2. An ITP-binding site is contributed by 14–19 (TGNAKK). Position 44 (Glu-44) interacts with Mg(2+). Residues Lys-56, 72–73 (DT), and Lys-89 contribute to the ITP site. Residue Ser-146 is modified to Phosphoserine. ITP-binding positions include 149–152 (FGWD), Lys-172, and 177–178 (HR).

This sequence belongs to the HAM1 NTPase family. In terms of assembly, homodimer. The cofactor is Mg(2+). Requires Mn(2+) as cofactor.

Its subcellular location is the cytoplasm. The catalysed reaction is ITP + H2O = IMP + diphosphate + H(+). It carries out the reaction dITP + H2O = dIMP + diphosphate + H(+). It catalyses the reaction XTP + H2O = XMP + diphosphate + H(+). The enzyme catalyses N(6)-hydroxy-dATP + H2O = N(6)-hydroxy-dAMP + diphosphate + H(+). Pyrophosphatase that hydrolyzes the non-canonical purine nucleotides inosine triphosphate (ITP), deoxyinosine triphosphate (dITP) as well as 2'-deoxy-N-6-hydroxylaminopurine triphosphate (dHAPTP) and xanthosine 5'-triphosphate (XTP) to their respective monophosphate derivatives. The enzyme does not distinguish between the deoxy- and ribose forms. Probably excludes non-canonical purines from RNA and DNA precursor pools, thus preventing their incorporation into RNA and DNA and avoiding chromosomal lesions. The chain is Inosine triphosphate pyrophosphatase (Itpa) from Rattus norvegicus (Rat).